Consider the following 1182-residue polypeptide: Tyrosine-protein kinase ABL2 (1182 aa).

A disordered region spans residues M1–A42. G2 is lipidated: N-myristoyl glycine. The CAP stretch occupies residues G2–E106. Residues R20–P30 are compositionally biased toward low complexity. S97 carries the phosphoserine modification. An SH3 domain is found at S107 to S167. Phosphotyrosine is present on residues Y116, Y161, Y174, Y185, Y218, and Y231. Residues W173–A263 form the SH2 domain. At Y261 the chain carries Phosphotyrosine; by ABL1 and autocatalysis. Y272 carries the phosphotyrosine; by autocatalysis modification. S275 bears the Phosphoserine mark. Positions I288–F539 constitute a Protein kinase domain. An ATP-binding site is contributed by L294–V302. Y299 and Y303 each carry phosphotyrosine. Residues K317 and E362–N368 each bind ATP. D409 functions as the Proton acceptor in the catalytic mechanism. A Kinase activation loop motif is present at residues D427–W451. At Y439 the chain carries Phosphotyrosine; by autocatalysis and SRC-type Tyr-kinases. Y459 is modified (phosphotyrosine). At Y568 the chain carries Phosphotyrosine; by autocatalysis. 5 positions are modified to phosphoserine: S606, S621, S632, S634, and S656. Disordered stretches follow at residues I612 to E642 and S655 to R674. Positions K659–R661 match the Nuclear localization signal motif. S670, S671, and S672 each carry phosphoserine. Y684 is modified (phosphotyrosine; by autocatalysis). The F-actin-binding stretch occupies residues S695–K930. Y719 carries the post-translational modification Phosphotyrosine. Residues L765–Q796 are disordered. The residue at position 778 (K778) is an N6-acetyllysine. The segment covering R782–L793 has biased composition (polar residues). Position 785 is a phosphoserine (S785). T802 is subject to Phosphothreonine. Residues R809 to E825 show a composition bias toward polar residues. Residues R809 to G858 are disordered. A phosphoserine mark is found at S819 and S822. The segment covering N827–K851 has biased composition (basic and acidic residues). Phosphoserine occurs at positions 915 and 936. The disordered stretch occupies residues H964–A1059. An F-actin-binding region spans residues E1020–R1182.

It belongs to the protein kinase superfamily. Tyr protein kinase family. ABL subfamily. In terms of assembly, interacts with PSMA7. Interacts with CTTN. Found in a complex with ABL1, ABL2, CRK and UNC119; leading to the inhibition of CRK phosphorylation by ABL kinases. It depends on Mg(2+) as a cofactor. Mn(2+) is required as a cofactor. Post-translationally, phosphorylated at Tyr-261 by ABL1 in response to oxidative stress. Phosphorylated by PDGFRB. Polyubiquitinated. Polyubiquitination of ABL2 leads to degradation. As to expression, most abundant in adult mouse brain, especially in synapse-rich regions.

It is found in the cytoplasm. Its subcellular location is the cytoskeleton. The catalysed reaction is L-tyrosyl-[protein] + ATP = O-phospho-L-tyrosyl-[protein] + ADP + H(+). Its activity is regulated as follows. Stabilized in the inactive form by an association between the SH3 domain and the SH2-TK linker region, interactions of the N-terminal cap, and contributions from an N-terminal myristoyl group and phospholipids. Activated by autophosphorylation as well as by SRC-family kinase-mediated phosphorylation. Activated by RIN1 binding to the SH2 and SH3 domains. Inhibited by imatinib mesylate (Gleevec). Phosphatidylinositol 4,5-bisphosphate (PIP2), a highly abundant phosphoinositide known to regulate cytoskeletal and membrane proteins, inhibits the tyrosine kinase activity. Functionally, non-receptor tyrosine-protein kinase that plays an ABL1-overlapping role in key processes linked to cell growth and survival such as cytoskeleton remodeling in response to extracellular stimuli, cell motility and adhesion, receptor endocytosis, autophagy, DNA damage response and apoptosis. Coordinates actin remodeling through tyrosine phosphorylation of proteins controlling cytoskeleton dynamics like MYH10 (involved in movement); CTTN (involved in signaling); or TUBA1 and TUBB (microtubule subunits). Binds directly F-actin and regulates actin cytoskeletal structure through its F-actin-bundling activity. Involved in the regulation of cell adhesion and motility through phosphorylation of key regulators of these processes such as CRK, CRKL or DOK1. Required for adhesion-dependent phosphorylation of ARHGAP35 which promotes its association with RASA1, resulting in recruitment of ARHGAP35 to the cell periphery where it inhibits RHO. Phosphorylates multiple receptor tyrosine kinases like PDGFRB and other substrates which are involved in endocytosis regulation such as RIN1. In brain, may regulate neurotransmission by phosphorylating proteins at the synapse. Finally, functions as its own regulator through autocatalytic activity as well as through phosphorylation of its inhibitor, ABI1. Positively regulates chemokine-mediated T-cell migration, polarization, and homing to lymph nodes and immune-challenged tissues, potentially via activation of NEDD9/HEF1 and RAP1. The polypeptide is Tyrosine-protein kinase ABL2 (Mus musculus (Mouse)).